The chain runs to 333 residues: Phosphoribosylformylglycinamidine cyclo-ligase (333 aa).

It belongs to the AIR synthase family.

Its subcellular location is the cytoplasm. It catalyses the reaction 2-formamido-N(1)-(5-O-phospho-beta-D-ribosyl)acetamidine + ATP = 5-amino-1-(5-phospho-beta-D-ribosyl)imidazole + ADP + phosphate + H(+). Its pathway is purine metabolism; IMP biosynthesis via de novo pathway; 5-amino-1-(5-phospho-D-ribosyl)imidazole from N(2)-formyl-N(1)-(5-phospho-D-ribosyl)glycinamide: step 2/2. This chain is Phosphoribosylformylglycinamidine cyclo-ligase, found in Methanococcoides burtonii (strain DSM 6242 / NBRC 107633 / OCM 468 / ACE-M).